A 299-amino-acid polypeptide reads, in one-letter code: Epimerase family protein SERP0438 (299 aa).

This sequence belongs to the NAD(P)-dependent epimerase/dehydratase family. SDR39U1 subfamily.

The sequence is that of Epimerase family protein SERP0438 from Staphylococcus epidermidis (strain ATCC 35984 / DSM 28319 / BCRC 17069 / CCUG 31568 / BM 3577 / RP62A).